The chain runs to 540 residues: Chaperonin GroEL (540 aa).

ATP-binding positions include 29–32 (TLGP), 86–90 (DGTTT), G413, and D495.

The protein belongs to the chaperonin (HSP60) family. In terms of assembly, forms a cylinder of 14 subunits composed of two heptameric rings stacked back-to-back. Interacts with the co-chaperonin GroES.

The protein resides in the cytoplasm. The catalysed reaction is ATP + H2O + a folded polypeptide = ADP + phosphate + an unfolded polypeptide.. In terms of biological role, together with its co-chaperonin GroES, plays an essential role in assisting protein folding. The GroEL-GroES system forms a nano-cage that allows encapsulation of the non-native substrate proteins and provides a physical environment optimized to promote and accelerate protein folding. The protein is Chaperonin GroEL of Caldanaerobacter subterraneus subsp. tengcongensis (strain DSM 15242 / JCM 11007 / NBRC 100824 / MB4) (Thermoanaerobacter tengcongensis).